Here is a 447-residue protein sequence, read N- to C-terminus: Tubulin beta chain (447 aa).

The GTP site is built by Q11, E69, S138, G142, T143, G144, N204, and N226. E69 lines the Mg(2+) pocket. The segment at 425–447 (YQEASISEGEEEYDEEAPLEAEE) is disordered. Over residues 432 to 447 (EGEEEYDEEAPLEAEE) the composition is skewed to acidic residues.

The protein belongs to the tubulin family. As to quaternary structure, dimer of alpha and beta chains. A typical microtubule is a hollow water-filled tube with an outer diameter of 25 nm and an inner diameter of 15 nM. Alpha-beta heterodimers associate head-to-tail to form protofilaments running lengthwise along the microtubule wall with the beta-tubulin subunit facing the microtubule plus end conferring a structural polarity. Microtubules usually have 13 protofilaments but different protofilament numbers can be found in some organisms and specialized cells. It depends on Mg(2+) as a cofactor.

The protein resides in the cytoplasm. The protein localises to the cytoskeleton. Tubulin is the major constituent of microtubules, a cylinder consisting of laterally associated linear protofilaments composed of alpha- and beta-tubulin heterodimers. Microtubules grow by the addition of GTP-tubulin dimers to the microtubule end, where a stabilizing cap forms. Below the cap, tubulin dimers are in GDP-bound state, owing to GTPase activity of alpha-tubulin. The protein is Tubulin beta chain (tubB) of Phaeosphaeria nodorum (strain SN15 / ATCC MYA-4574 / FGSC 10173) (Glume blotch fungus).